A 795-amino-acid polypeptide reads, in one-letter code: Delta-1-pyrroline-5-carboxylate synthase (795 aa).

The glutamate 5-kinase stretch occupies residues 1 to 361 (MLSQVYRCGF…FFSEVKPAGP (361 aa)). Substrate is bound by residues Ser-117, Asp-223, and Asn-246. ATP is bound by residues 266–267 (SD) and 305–311 (MGGMEAK). Residues Lys-311, Lys-347, and Lys-550 each carry the N6-succinyllysine modification. The segment at 362-795 (TVEQQGEMAR…NLPIPQRNTN (434 aa)) is gamma-glutamyl phosphate reductase.

In the N-terminal section; belongs to the glutamate 5-kinase family. The protein in the C-terminal section; belongs to the gamma-glutamyl phosphate reductase family. Can form homodimers/multimers.

The protein resides in the mitochondrion. Its subcellular location is the mitochondrion matrix. It catalyses the reaction L-glutamate + ATP = L-glutamyl 5-phosphate + ADP. It carries out the reaction L-glutamate 5-semialdehyde + phosphate + NADP(+) = L-glutamyl 5-phosphate + NADPH + H(+). It functions in the pathway amino-acid biosynthesis; L-proline biosynthesis; L-glutamate 5-semialdehyde from L-glutamate: step 1/2. The protein operates within amino-acid biosynthesis; L-proline biosynthesis; L-glutamate 5-semialdehyde from L-glutamate: step 2/2. Its activity is regulated as follows. Isoform Short: Inhibited by L-ornithine with a Ki of approximately 0.25 mm. Isoform Long: Insensitive to ornithine inhibition. This is due to the two amino acid insert which abolishes feedback inhibition of P5CS activity by L-ornithine. Bifunctional enzyme that converts glutamate to glutamate 5-semialdehyde, an intermediate in the biosynthesis of proline, ornithine and arginine. The polypeptide is Delta-1-pyrroline-5-carboxylate synthase (ALDH18A1) (Homo sapiens (Human)).